The primary structure comprises 218 residues: Copper acquisition factor BIM1 (218 aa).

Positions Met-1–Ala-19 are cleaved as a signal peptide. Residues His-20 and His-65 each coordinate Cu(2+). Residues Asn-87, Asn-91, and Asn-124 are each glycosylated (N-linked (GlcNAc...) asparagine). Cu(2+) is bound at residue Asp-138. Asn-158 and Asn-170 each carry an N-linked (GlcNAc...) asparagine glycan. The segment at Thr-160–Ser-194 is disordered. Residues Ala-165–Ser-194 show a composition bias toward low complexity. Ser-190 is lipidated: GPI-anchor amidated serine. Positions Ser-191–Leu-218 are cleaved as a propeptide — removed in mature form.

The protein belongs to the X325 family. In terms of assembly, interacts with the CUF1-dependent copper transporter CTR1. The cofactor is Cu(2+).

Its subcellular location is the cell membrane. Functionally, lytic polysaccharide monooxygenase-like protein that has diverged to biological functions other than polysaccharide degradation since it does not perform oxidative cleavage of polysaccharides. Cell surface-bound protein that functions in the copper-accumulation pathway shared by the CUF1-dependent copper transporter CTR1. Involved in maintaining cell wall integrity during copper deficiency. Binds Cu(2+) with an estimated 1:1 stoichiometry and might serve as an extracellular copper ligand. FRE4 and FRE7 metalloreductases probably function together with CTR1 and BIM1 to liberate the Cu(2+) bound to the BIM1 copper-binding site for subsequent import of Cu(+) into the cell by CTR1, via the reduction of BIM1-bound Cu(2+) to Cu(+) to reduce binding affinity for BIM1 but increase affinity for CTR1. Facilitates copper acquisition in the brain of mammalian hosts and acts as a copper-dependent virulence trait in fungal meningitis. While BIM1 plays a critical role in cryptococcal meningitis, at least in part through its role in copper acquisition, it could play additional roles during copper limitation or as a means to invade and colonize host tissues in the brain, by compromising host carbohydrate integrity via its lytic polysaccharide monooxygenase (LPMO) activity, which has still to be determined. This is Copper acquisition factor BIM1 from Cryptococcus neoformans var. grubii serotype A (strain H99 / ATCC 208821 / CBS 10515 / FGSC 9487) (Filobasidiella neoformans var. grubii).